We begin with the raw amino-acid sequence, 380 residues long: Cytochrome b (380 aa).

Transmembrane regions (helical) follow at residues 34–54 (FGSL…LLAM), 78–99 (WLIR…YLHI), 114–134 (WNTG…GYVL), and 179–199 (FFAL…IHLT). The heme b site is built by histidine 84 and histidine 98. Residues histidine 183 and histidine 197 each coordinate heme b. An a ubiquinone-binding site is contributed by histidine 202. 4 helical membrane-spanning segments follow: residues 227–247 (LKDI…ALFS), 289–309 (LGGV…PLLH), 321–341 (LSQL…WIGS), and 348–368 (FIII…VLFP).

The protein belongs to the cytochrome b family. As to quaternary structure, the cytochrome bc1 complex contains 11 subunits: 3 respiratory subunits (MT-CYB, CYC1 and UQCRFS1), 2 core proteins (UQCRC1 and UQCRC2) and 6 low-molecular weight proteins (UQCRH/QCR6, UQCRB/QCR7, UQCRQ/QCR8, UQCR10/QCR9, UQCR11/QCR10 and a cleavage product of UQCRFS1). This cytochrome bc1 complex then forms a dimer. Heme b is required as a cofactor.

The protein localises to the mitochondrion inner membrane. Its function is as follows. Component of the ubiquinol-cytochrome c reductase complex (complex III or cytochrome b-c1 complex) that is part of the mitochondrial respiratory chain. The b-c1 complex mediates electron transfer from ubiquinol to cytochrome c. Contributes to the generation of a proton gradient across the mitochondrial membrane that is then used for ATP synthesis. The chain is Cytochrome b (MT-CYB) from Oceanodroma melania (Black storm-petrel).